Reading from the N-terminus, the 225-residue chain is Urease accessory protein UreF (225 aa).

This sequence belongs to the UreF family. In terms of assembly, ureD, UreF and UreG form a complex that acts as a GTP-hydrolysis-dependent molecular chaperone, activating the urease apoprotein by helping to assemble the nickel containing metallocenter of UreC. The UreE protein probably delivers the nickel.

Its subcellular location is the cytoplasm. Its function is as follows. Required for maturation of urease via the functional incorporation of the urease nickel metallocenter. In Thermosynechococcus vestitus (strain NIES-2133 / IAM M-273 / BP-1), this protein is Urease accessory protein UreF.